The sequence spans 192 residues: Threonylcarbamoyl-AMP synthase (192 aa).

The 188-residue stretch at 5 to 192 folds into the YrdC-like domain; the sequence is TTSVAEAAHC…DATTGRVIRD (188 aa).

The protein belongs to the SUA5 family. TsaC subfamily.

It localises to the cytoplasm. The catalysed reaction is L-threonine + hydrogencarbonate + ATP = L-threonylcarbamoyladenylate + diphosphate + H2O. Required for the formation of a threonylcarbamoyl group on adenosine at position 37 (t(6)A37) in tRNAs that read codons beginning with adenine. Catalyzes the conversion of L-threonine, HCO(3)(-)/CO(2) and ATP to give threonylcarbamoyl-AMP (TC-AMP) as the acyladenylate intermediate, with the release of diphosphate. The sequence is that of Threonylcarbamoyl-AMP synthase from Acinetobacter baylyi (strain ATCC 33305 / BD413 / ADP1).